A 230-amino-acid polypeptide reads, in one-letter code: Methyltransferase aurB (230 aa).

It belongs to the methyltransferase superfamily.

Its pathway is polyketide biosynthesis. In terms of biological role, methyltransferase; part of the gene cluster that mediates the biosynthesis of aurovertins, fungal polyketides that exhibit potent inhibition of adenosine triphosphate synthase. Tha biosynthesis starts with the HR-PKS aurA that selects propionate as the starter unit; synthesizes a hexa-ene chain through the repeated functions of the KR and DH domains in the first six iterations; selectively introduces three alpha-methyl substitutions at C4, C6, and C16 using the S-adensylmethionine-dependent cMET; and shuts off KR and DH in the last three iterations to afford a 1,3,5-triketo portion that can undergo intramolecular cyclization to yield the alpha-pyrone intermediate. AurE may act as a cyclase and enhances the rate of pyrone formation and product release of aurA. The methyltransferase aurB then methylates the C17 hydroxyl group. C17 methylation is required to initiate epoxidation by the downstream monooxygenase aurC. The monooxygenase aurC and the epoxide hydrolase aurD can iteratively transform the terminal triene portion of the methylated precursor into the dioxabicyclo[3.2.1]octane scaffold of aurovertin E. Epoxidation modifications of the precursor occur in two separate steps; bis-epoxidation of the two terminal olefins takes place first, followed by another epoxidation that occurs at C7-C8 after tetrahydrofuran formation. The O-acyltransferase aurG converts aurovertin E to aurovertin A. The protein is Methyltransferase aurB of Calcarisporium arbuscula (Dendryphion arbuscula).